The primary structure comprises 1509 residues: Dynein axonemal assembly factor 1 homolog (1509 aa).

LRR repeat units follow at residues 34 to 56 (RLNDTLYLHYQGFQCIEHLEEYT), 57 to 78 (ELKCLWLECNAISEIQGLEKLS), 79 to 100 (KLKCLFLQNNLITKIENLEPCR), 101 to 122 (ELDTLNLSSNHIRKIQNIGTNI), 125 to 146 (VLNTLTIASNYLKDSESLSDLV), and 150 to 171 (TLSVLDLSNNRIDDILIVKIFE). An LRRCT domain is found at 185-223 (PVVSRLPQYRKTLILACKELTYLDSRPVFPRDRACAEAW). Disordered regions lie at residues 252–280 (CTIRIRNSHRPPDQQDPLLRSSDSEDDTC), 306–327 (HPTSESGASTSSSVEDNDATSS), 962–1008 (SGDL…DSKN), and 1103–1122 (TLQTSFSTVGSDEGKTKLRN). Low complexity predominate over residues 309–318 (SESGASTSSS). A compositionally biased stretch (acidic residues) spans 978 to 990 (SESEDYDTADDEY). Positions 1103–1112 (TLQTSFSTVG) are enriched in polar residues.

This sequence belongs to the DNAAF1 family.

It localises to the cell projection. The protein localises to the cilium. In terms of biological role, cilium-specific protein required for cilia structures. This Drosophila yakuba (Fruit fly) protein is Dynein axonemal assembly factor 1 homolog (dtr).